The chain runs to 58 residues: MKIYKCAFCGADILPGYGIMYVKTDGTTLRFCSRKCFVSAVKFKRDPRRLAWVRKRQK.

Zn(2+)-binding residues include cysteine 6, cysteine 9, cysteine 32, and cysteine 36. The segment at 6–36 adopts a C4-type zinc-finger fold; it reads CAFCGADILPGYGIMYVKTDGTTLRFCSRKC.

Belongs to the eukaryotic ribosomal protein eL24 family. As to quaternary structure, part of the 50S ribosomal subunit. Forms a cluster with proteins L3 and L14. It depends on Zn(2+) as a cofactor.

Binds to the 23S rRNA. This chain is Large ribosomal subunit protein eL24, found in Pyrobaculum islandicum (strain DSM 4184 / JCM 9189 / GEO3).